The primary structure comprises 225 residues: GTP:AMP phosphotransferase, mitochondrial (225 aa).

GTP is bound at residue 24–29 (GSGKGT). The interval 45–74 (SSGDILRQEIKSESTLGREATTYIAQGKLL) is NMP. Residues Ser46, Arg51, 72–74 (KLL), 103–106 (GFPR), and Gln110 contribute to the AMP site. Residues 144–181 (NRYVHVPSGRVYNLQYNPPKVPGLDDITGEPLTKRLDD) are LID. Residues Arg145 and 154–155 (VY) each bind GTP. AMP-binding residues include Arg178 and Arg189. GTP is bound at residue Ser218.

It belongs to the adenylate kinase family. AK3 subfamily. As to quaternary structure, monomer.

It is found in the mitochondrion matrix. The catalysed reaction is a ribonucleoside 5'-triphosphate + AMP = a ribonucleoside 5'-diphosphate + ADP. Involved in maintaining the homeostasis of cellular nucleotides by catalyzing the interconversion of nucleoside phosphates. Has GTP:AMP phosphotransferase and ITP:AMP phosphotransferase activities. Does not accept ATP as phosphate donor. In Saccharomyces cerevisiae (strain ATCC 204508 / S288c) (Baker's yeast), this protein is GTP:AMP phosphotransferase, mitochondrial.